The following is a 646-amino-acid chain: RNase E specificity factor CsrD (646 aa).

Transmembrane regions (helical) follow at residues 10 to 30 (FVTLLTGLTIFVTLLGCSLSF) and 135 to 155 (MTTAPLTGAIGFIIVMLFLAV). Positions 152–219 (FLAVRWLQRQ…REQHSRLDTL (68 aa)) are HAMP-like. Residues 194-224 (RTSSALDTLLREIQNAREQHSRLDTLIRSYA) adopt a coiled-coil conformation. Residues 254-387 (THGIVMMIRL…GGNSWAIYDD (134 aa)) enclose the GGDEF domain. The region spanning 396–644 (NVRWRTLIEQ…TNVKKYSQRY (249 aa)) is the EAL domain.

It localises to the cell membrane. Functionally, serves as a specificity factor required for RNase E-mediated decay of the small global regulatory RNAs CsrB and CsrC, it is probably not a nuclease. Nor does its activity involve c-di-GMP, despite its domain composition. Positively modulates motility gene expression, is also required for curli expression. The protein is RNase E specificity factor CsrD (csrD) of Escherichia coli (strain K12).